The following is a 601-amino-acid chain: ATP-dependent lipid A-core flippase (601 aa).

The region spanning 28 to 328 (LLSVCGLIVY…LTRVNAEFQR (301 aa)) is the ABC transmembrane type-1 domain. 6 helical membrane-spanning segments follow: residues 32–52 (CGLI…GPFI), 81–101 (VLLM…FANF), 160–180 (ALIS…LMFY), 183–203 (WKLS…ITIV), 267–287 (AVSQ…VLYA), and 296–316 (DLTA…LQPI). Positions 360–597 (LRFDNVSFSY…GGMYAKLYQM (238 aa)) constitute an ABC transporter domain. 394-401 (GRSGSGKS) is an ATP binding site.

Belongs to the ABC transporter superfamily. Lipid exporter (TC 3.A.1.106) family. Homodimer.

The protein localises to the cell inner membrane. It catalyses the reaction ATP + H2O + lipid A-core oligosaccharideSide 1 = ADP + phosphate + lipid A-core oligosaccharideSide 2.. In terms of biological role, involved in lipopolysaccharide (LPS) biosynthesis. Translocates lipid A-core from the inner to the outer leaflet of the inner membrane. Transmembrane domains (TMD) form a pore in the inner membrane and the ATP-binding domain (NBD) is responsible for energy generation. The polypeptide is ATP-dependent lipid A-core flippase (Shewanella sp. (strain MR-4)).